Here is a 391-residue protein sequence, read N- to C-terminus: Elongation factor Tu (391 aa).

In terms of domain architecture, tr-type G spans 10–201 (KPHVNIGTIG…AVDEYIPTPA (192 aa)). The interval 19–26 (GHVDHGKT) is G1. 19–26 (GHVDHGKT) is a GTP binding site. Threonine 26 lines the Mg(2+) pocket. The interval 55–59 (GITIS) is G2. Residues 76-79 (DCPG) are G3. GTP contacts are provided by residues 76–80 (DCPGH) and 131–134 (NKVD). Positions 131–134 (NKVD) are G4. A G5 region spans residues 169–171 (SAL).

The protein belongs to the TRAFAC class translation factor GTPase superfamily. Classic translation factor GTPase family. EF-Tu/EF-1A subfamily. As to quaternary structure, monomer.

Its subcellular location is the cytoplasm. It carries out the reaction GTP + H2O = GDP + phosphate + H(+). Its function is as follows. GTP hydrolase that promotes the GTP-dependent binding of aminoacyl-tRNA to the A-site of ribosomes during protein biosynthesis. In Jannaschia sp. (strain CCS1), this protein is Elongation factor Tu.